The following is a 91-amino-acid chain: Uteroglobin (91 aa).

An N-terminal signal peptide occupies residues 1–21; that stretch reads MKLTITLALVTLALLCSPASA.

The protein belongs to the secretoglobin family. Antiparallel homodimer; disulfide-linked. Interaction with LMBR1L is controversial.

The protein localises to the secreted. In terms of biological role, uteroglobin binds progesterone specifically and with high affinity. It may regulate progesterone concentrations reaching the blastocyst. It is also a potent inhibitor of phospholipase A2. This Lepus capensis (Brown hare) protein is Uteroglobin (SCGB1A1).